Consider the following 296-residue polypeptide: ATP synthase peripheral stalk subunit OSCP, mitochondrial (296 aa).

It belongs to the ATPase delta chain family. Component of the ATP synthase complex composed at least of ATP5F1A/subunit alpha, ATP5F1B/subunit beta, ATP5MC1/subunit c (homooctomer), MT-ATP6/subunit a, MT-ATP8/subunit 8, ATP5ME/subunit e, ATP5MF/subunit f, ATP5MG/subunit g, ATP5MK/subunit k, ATP5MJ/subunit j, ATP5F1C/subunit gamma, ATP5F1D/subunit delta, ATP5F1E/subunit epsilon, ATP5PF/subunit F6, ATP5PB/subunit b, ATP5PD/subunit d, ATP5PO/subunit OSCP. ATP synthase complex consists of a soluble F(1) head domain (subunits alpha(3) and beta(3)) - the catalytic core - and a membrane F(0) domain - the membrane proton channel (subunits c, a, 8, e, f, g, k and j). These two domains are linked by a central stalk (subunits gamma, delta, and epsilon) rotating inside the F1 region and a stationary peripheral stalk (subunits F6, b, d, and OSCP).

It is found in the mitochondrion. The protein resides in the mitochondrion inner membrane. Subunit OSCP, of the mitochondrial membrane ATP synthase complex (F(1)F(0) ATP synthase or Complex V) that produces ATP from ADP in the presence of a proton gradient across the membrane which is generated by electron transport complexes of the respiratory chain. ATP synthase complex consist of a soluble F(1) head domain - the catalytic core - and a membrane F(1) domain - the membrane proton channel. These two domains are linked by a central stalk rotating inside the F(1) region and a stationary peripheral stalk. During catalysis, ATP synthesis in the catalytic domain of F(1) is coupled via a rotary mechanism of the central stalk subunits to proton translocation. In vivo, can only synthesize ATP although its ATP hydrolase activity can be activated artificially in vitro. Part of the complex F(0) domain. Part of the complex F(0) domain and the peripheric stalk, which acts as a stator to hold the catalytic alpha(3)beta(3) subcomplex and subunit a/ATP6 static relative to the rotary elements. The polypeptide is ATP synthase peripheral stalk subunit OSCP, mitochondrial (Dictyostelium discoideum (Social amoeba)).